A 103-amino-acid chain; its full sequence is Small ribosomal subunit protein uS10 (103 aa).

It belongs to the universal ribosomal protein uS10 family. Part of the 30S ribosomal subunit.

Its function is as follows. Involved in the binding of tRNA to the ribosomes. In Mycoplasmopsis pulmonis (strain UAB CTIP) (Mycoplasma pulmonis), this protein is Small ribosomal subunit protein uS10.